The sequence spans 363 residues: MRKSTVYSWINKKKYILKINVISIINYIWFKKTIMRFFLYPFSLIYFLVIKIIYILYKCNFKKTYNFNIPIIVIGNITVGGNGKTPLVIWLSKQLKKRKWKVGVVSRGYGRKYDFPIIINSNFTHDICGDEPILIHKRSNVPVAVSSNRILAIKMLLEYYNLDIIISDDGLQHHSMGRCIEWIVIDNNRKFGNNLLLPAGPMRETKKKLNKVNKVIINGCCRNKNIIKMNLYHKNYVINLLNGSKKRLNDLFPTILISGISNNKNFFSMVRKSGIIPIREISFPDHYIYDKNILTSLTKNNEHLLMTEKDSIKCKYFAKINWWYLPIYVFFSKKCKEVLLSSVEKKIIIFKFKNKKNNIFNKI.

An ATP-binding site is contributed by threonine 78 to threonine 85.

It belongs to the LpxK family.

It catalyses the reaction a lipid A disaccharide + ATP = a lipid IVA + ADP + H(+). It functions in the pathway glycolipid biosynthesis; lipid IV(A) biosynthesis; lipid IV(A) from (3R)-3-hydroxytetradecanoyl-[acyl-carrier-protein] and UDP-N-acetyl-alpha-D-glucosamine: step 6/6. Its function is as follows. Transfers the gamma-phosphate of ATP to the 4'-position of a tetraacyldisaccharide 1-phosphate intermediate (termed DS-1-P) to form tetraacyldisaccharide 1,4'-bis-phosphate (lipid IVA). The sequence is that of Tetraacyldisaccharide 4'-kinase from Wigglesworthia glossinidia brevipalpis.